The sequence spans 261 residues: Indole-3-glycerol phosphate synthase (261 aa).

It belongs to the TrpC family.

The enzyme catalyses 1-(2-carboxyphenylamino)-1-deoxy-D-ribulose 5-phosphate + H(+) = (1S,2R)-1-C-(indol-3-yl)glycerol 3-phosphate + CO2 + H2O. Its pathway is amino-acid biosynthesis; L-tryptophan biosynthesis; L-tryptophan from chorismate: step 4/5. The polypeptide is Indole-3-glycerol phosphate synthase (Oceanobacillus iheyensis (strain DSM 14371 / CIP 107618 / JCM 11309 / KCTC 3954 / HTE831)).